The sequence spans 204 residues: Ribosomal RNA small subunit methyltransferase G (204 aa).

S-adenosyl-L-methionine is bound by residues G73, F78, and R139.

This sequence belongs to the methyltransferase superfamily. RNA methyltransferase RsmG family.

The protein localises to the cytoplasm. The enzyme catalyses guanosine(527) in 16S rRNA + S-adenosyl-L-methionine = N(7)-methylguanosine(527) in 16S rRNA + S-adenosyl-L-homocysteine. Specifically methylates the N7 position of guanine in position 527 of 16S rRNA. The polypeptide is Ribosomal RNA small subunit methyltransferase G (Coxiella burnetii (strain Dugway 5J108-111)).